Here is a 449-residue protein sequence, read N- to C-terminus: Exodeoxyribonuclease 7 large subunit (449 aa).

It belongs to the XseA family. As to quaternary structure, heterooligomer composed of large and small subunits.

It is found in the cytoplasm. The catalysed reaction is Exonucleolytic cleavage in either 5'- to 3'- or 3'- to 5'-direction to yield nucleoside 5'-phosphates.. Bidirectionally degrades single-stranded DNA into large acid-insoluble oligonucleotides, which are then degraded further into small acid-soluble oligonucleotides. This is Exodeoxyribonuclease 7 large subunit from Latilactobacillus sakei subsp. sakei (strain 23K) (Lactobacillus sakei subsp. sakei).